The primary structure comprises 165 residues: Pyruvoyl-dependent arginine decarboxylase 1 (165 aa).

S45 bears the Pyruvic acid (Ser) mark.

The protein belongs to the PdaD family. Pyruvate is required as a cofactor.

It carries out the reaction L-arginine + H(+) = agmatine + CO2. The protein is Pyruvoyl-dependent arginine decarboxylase 1 (pdaD1) of Methanosarcina mazei (strain ATCC BAA-159 / DSM 3647 / Goe1 / Go1 / JCM 11833 / OCM 88) (Methanosarcina frisia).